The sequence spans 202 residues: Twist-related protein 1 (202 aa).

Low complexity predominate over residues 1–18 (MMQDVSSSPVSPADDSLS). Residues 1-105 (MMQDVSSSPV…GGGSPQSYEE (105 aa)) form a disordered region. Over residues 34–43 (RGGRKRRSSR) the composition is skewed to basic residues. Gly residues-rich tracts occupy residues 46-65 (AGGG…GGDE) and 80-99 (GCGG…GGGS). Positions 108 to 159 (TQRVMANVRERQRTQSLNEAFAALRKIIPTLPSDKLSKIQTLKLAARYIDFL) constitute a bHLH domain. A sufficient for transactivation activity region spans residues 161-191 (QVLQSDELDSKMASCSYVAHERLSYAFSVWR).

In terms of assembly, efficient DNA binding requires dimerization with another bHLH protein. Homodimer or heterodimer with E proteins such as TCF3. ID1 binds preferentially to TCF3 but does not interact efficiently with TWIST1 so ID1 levels control the amount of TCF3 available to dimerize with TWIST1 and thus determine the type of dimer formed. As to expression, subset of mesodermal cells.

It is found in the nucleus. Its function is as follows. Acts as a transcriptional regulator. Inhibits myogenesis by sequestrating E proteins, inhibiting trans-activation by MEF2, and inhibiting DNA-binding by MYOD1 through physical interaction. This interaction probably involves the basic domains of both proteins. Also represses expression of pro-inflammatory cytokines such as TNFA and IL1B. Regulates cranial suture patterning and fusion. Activates transcription as a heterodimer with E proteins. Regulates gene expression differentially, depending on dimer composition. Homodimers induce expression of FGFR2 and POSTN while heterodimers repress FGFR2 and POSTN expression and induce THBS1 expression. Heterodimerization is also required for osteoblast differentiation. Represses the activity of the circadian transcriptional activator: NPAS2-BMAL1 heterodimer. This chain is Twist-related protein 1 (TWIST1), found in Homo sapiens (Human).